Consider the following 199-residue polypeptide: dITP/XTP pyrophosphatase (199 aa).

7–12 (SNNPGK) is a binding site for substrate. The active-site Proton acceptor is aspartate 68. Aspartate 68 lines the Mg(2+) pocket. Substrate contacts are provided by residues alanine 69, 154-157 (FGFD), lysine 177, and 182-183 (HR).

The protein belongs to the HAM1 NTPase family. Homodimer. Requires Mg(2+) as cofactor.

It catalyses the reaction XTP + H2O = XMP + diphosphate + H(+). It carries out the reaction dITP + H2O = dIMP + diphosphate + H(+). The catalysed reaction is ITP + H2O = IMP + diphosphate + H(+). Pyrophosphatase that catalyzes the hydrolysis of nucleoside triphosphates to their monophosphate derivatives, with a high preference for the non-canonical purine nucleotides XTP (xanthosine triphosphate), dITP (deoxyinosine triphosphate) and ITP. Seems to function as a house-cleaning enzyme that removes non-canonical purine nucleotides from the nucleotide pool, thus preventing their incorporation into DNA/RNA and avoiding chromosomal lesions. In Verminephrobacter eiseniae (strain EF01-2), this protein is dITP/XTP pyrophosphatase.